A 317-amino-acid chain; its full sequence is Aspartate carbamoyltransferase catalytic subunit (317 aa).

The carbamoyl phosphate site is built by R55 and T56. K83 provides a ligand contact to L-aspartate. Carbamoyl phosphate is bound by residues R105, H138, and Q141. 2 residues coordinate L-aspartate: R171 and R225. Residues G266 and P267 each coordinate carbamoyl phosphate.

This sequence belongs to the aspartate/ornithine carbamoyltransferase superfamily. ATCase family. As to quaternary structure, heterododecamer (2C3:3R2) of six catalytic PyrB chains organized as two trimers (C3), and six regulatory PyrI chains organized as three dimers (R2).

It catalyses the reaction carbamoyl phosphate + L-aspartate = N-carbamoyl-L-aspartate + phosphate + H(+). It participates in pyrimidine metabolism; UMP biosynthesis via de novo pathway; (S)-dihydroorotate from bicarbonate: step 2/3. Functionally, catalyzes the condensation of carbamoyl phosphate and aspartate to form carbamoyl aspartate and inorganic phosphate, the committed step in the de novo pyrimidine nucleotide biosynthesis pathway. This Mycobacteroides abscessus (strain ATCC 19977 / DSM 44196 / CCUG 20993 / CIP 104536 / JCM 13569 / NCTC 13031 / TMC 1543 / L948) (Mycobacterium abscessus) protein is Aspartate carbamoyltransferase catalytic subunit.